The chain runs to 445 residues: Maltoporin 2 (445 aa).

An N-terminal signal peptide occupies residues 1–25; it reads MKMKAKWLPIAAAVTAALASQAAFA.

The protein belongs to the porin LamB (TC 1.B.3) family. Homotrimer formed of three 18-stranded antiparallel beta-barrels, containing three independent channels.

Its subcellular location is the cell outer membrane. The catalysed reaction is beta-maltose(in) = beta-maltose(out). In terms of biological role, involved in the transport of maltose and maltodextrins. In Aeromonas salmonicida (strain A449), this protein is Maltoporin 2.